The sequence spans 1413 residues: DNA-directed RNA polymerase subunit beta' (1413 aa).

Residues C70, C72, C85, and C88 each coordinate Zn(2+). Mg(2+) is bound by residues D460, D462, and D464. Residues C819, C893, C900, and C903 each coordinate Zn(2+).

It belongs to the RNA polymerase beta' chain family. The RNAP catalytic core consists of 2 alpha, 1 beta, 1 beta' and 1 omega subunit. When a sigma factor is associated with the core the holoenzyme is formed, which can initiate transcription. Mg(2+) serves as cofactor. The cofactor is Zn(2+).

The enzyme catalyses RNA(n) + a ribonucleoside 5'-triphosphate = RNA(n+1) + diphosphate. In terms of biological role, DNA-dependent RNA polymerase catalyzes the transcription of DNA into RNA using the four ribonucleoside triphosphates as substrates. This chain is DNA-directed RNA polymerase subunit beta', found in Burkholderia multivorans (strain ATCC 17616 / 249).